Reading from the N-terminus, the 462-residue chain is Probable threonine/serine transporter YbxG (462 aa).

12 helical membrane-spanning segments follow: residues 17 to 37 (MIAL…STIS), 38 to 58 (WTGP…FFIM), 89 to 109 (ITAW…IIAV), 121 to 141 (PAWI…LISV), 154 to 174 (IKIV…FFGF), 190 to 210 (GGFF…VIAA), 238 to 258 (IIWR…TVYP), 276 to 296 (IGIT…AMSG), 331 to 351 (LYGT…NYIA), 355 to 375 (IFVY…FIIL), 398 to 418 (FAPF…VGMW), and 427 to 447 (LIVG…FGIG).

The protein belongs to the amino acid-polyamine-organocation (APC) superfamily.

Its subcellular location is the cell membrane. Its function is as follows. Probable threonine transporter. Is also active as a minor serine permease. In Bacillus subtilis (strain 168), this protein is Probable threonine/serine transporter YbxG (ybxG).